The sequence spans 416 residues: Imidazolonepropionase (416 aa).

Fe(3+)-binding residues include His78 and His80. Zn(2+) contacts are provided by His78 and His80. 3 residues coordinate 4-imidazolone-5-propanoate: Arg87, Tyr150, and His183. Tyr150 is an N-formimidoyl-L-glutamate binding site. His248 lines the Fe(3+) pocket. Zn(2+) is bound at residue His248. Gln251 is a 4-imidazolone-5-propanoate binding site. A Fe(3+)-binding site is contributed by Asp323. Residue Asp323 participates in Zn(2+) binding. N-formimidoyl-L-glutamate contacts are provided by Asn325 and Gly327. Residue Thr328 participates in 4-imidazolone-5-propanoate binding.

The protein belongs to the metallo-dependent hydrolases superfamily. HutI family. Requires Zn(2+) as cofactor. It depends on Fe(3+) as a cofactor.

It localises to the cytoplasm. The enzyme catalyses 4-imidazolone-5-propanoate + H2O = N-formimidoyl-L-glutamate. It functions in the pathway amino-acid degradation; L-histidine degradation into L-glutamate; N-formimidoyl-L-glutamate from L-histidine: step 3/3. Its function is as follows. Catalyzes the hydrolytic cleavage of the carbon-nitrogen bond in imidazolone-5-propanoate to yield N-formimidoyl-L-glutamate. It is the third step in the universal histidine degradation pathway. In Vibrio parahaemolyticus serotype O3:K6 (strain RIMD 2210633), this protein is Imidazolonepropionase.